We begin with the raw amino-acid sequence, 79 residues long: WAP four-disulfide core domain protein 10A (79 aa).

The signal sequence occupies residues Met-1–Gly-21. The 46-residue stretch at Leu-34–Leu-79 folds into the WAP domain. 4 disulfides stabilise this stretch: Cys-41/Cys-67, Cys-50/Cys-71, Cys-54/Cys-66, and Cys-60/Cys-75.

The protein localises to the secreted. This Homo sapiens (Human) protein is WAP four-disulfide core domain protein 10A (WFDC10A).